Reading from the N-terminus, the 425-residue chain is Aromatic prenyl transferase PC-22 (425 aa).

Residues 83-84 and glutamate 92 contribute to the L-tryptophan site; that span reads GI. Residues arginine 107, lysine 198, tyrosine 200, arginine 265, lysine 267, tyrosine 269, tyrosine 345, tyrosine 410, and tyrosine 414 each coordinate substrate.

This sequence belongs to the tryptophan dimethylallyltransferase family. As to quaternary structure, homodimer.

It functions in the pathway secondary metabolite biosynthesis. Functionally, aromatic prenyl transferase; part of the gene cluster that mediates the biosynthesis of the indole diterpenes penitrems. The geranylgeranyl diphosphate (GGPP) synthase penG catalyzes the first step in penitrem biosynthesis via conversion of farnesyl pyrophosphate and isopentyl pyrophosphate into geranylgeranyl pyrophosphate (GGPP). Condensation of indole-3-glycerol phosphate with GGPP by the prenyl transferase penC then forms 3-geranylgeranylindole (3-GGI). Epoxidation by the FAD-dependent monooxygenase penM leads to a epoxidized-GGI that is substrate of the terpene cyclase penB for cyclization to yield paspaline. Paspaline is subsequently converted to 13-desoxypaxilline by the cytochrome P450 monooxygenase penP, the latter being then converted to paxilline by the cytochrome P450 monooxygenase penQ. Paxilline is converted to beta-paxitriol via C-10 ketoreduction by the short-chain dehydrogenase PC-15 which can be monoprenylated at the C-20 by the indole diterpene prenyltransferase penD. A two-step elimination (acetylation and elimination) process performed by the O-acetyltransferase PC-16 and the P.simplicissimum ptmI-ortholog not yet identified in P.crustosum, leads to the production of the prenylated form of penijanthine. The FAD-linked oxidoreductase ptmO then converts the prenylated form of penijanthine into PC-M5 which is in turn transformed into PC-M4 by the aromatic dimethylallyltransferase PC-22. A series of oxidation steps involving 4 cytochrome P450 monooxygenases (PC-21, PC-05, PC-23, PC-20) and a FAD-dependent monooxygenase (PC-14) are required for the transformation of PC-M4 to penitrems A and E. Synthesis of these final products is proposed to proceed via penitrems D and C (PC-21, PC-05, PC-14) and penitrems B and F (PC-21, PC-05, PC-14, PC-23). The polypeptide is Aromatic prenyl transferase PC-22 (Penicillium crustosum (Blue mold fungus)).